We begin with the raw amino-acid sequence, 90 residues long: MANSAQARKRARQAAKANSHNSALRSKFRTAIKSVRKAVEAGDQAKAAELFKAAVKTIDTIADKKIVHKNKAARSKSRLAAAVKGLQAAA.

The disordered stretch occupies residues 1 to 25; it reads MANSAQARKRARQAAKANSHNSALR.

Belongs to the bacterial ribosomal protein bS20 family.

Binds directly to 16S ribosomal RNA. The protein is Small ribosomal subunit protein bS20 of Burkholderia orbicola (strain MC0-3).